A 123-amino-acid polypeptide reads, in one-letter code: MSGKVEIMNMDMKVGKTLKIKGKXDDDADGFXINLGQGTDKLALHFXPRFGESTIVCNXRDGNXWGKEQRDSHMXFXPGSEVKLIVTFEEDGFKVKLPDGHQLTFPNRLGYSHLRYLSVQGGF.

Residues 4 to 123 (KVEIMNMDMK…LRYLSVQGGF (120 aa)) form the Galectin domain. 65–71 (WGKEQRD) is an a beta-D-galactoside binding site.

In terms of assembly, homodimer.

Its function is as follows. This protein binds beta-galactoside. Its physiological function is not yet known. The polypeptide is Galectin-2 (LGALS2) (Sus scrofa (Pig)).